Consider the following 255-residue polypeptide: Imidazole glycerol phosphate synthase subunit HisF (255 aa).

Residues D12 and D131 contribute to the active site.

The protein belongs to the HisA/HisF family. In terms of assembly, heterodimer of HisH and HisF.

The protein resides in the cytoplasm. The enzyme catalyses 5-[(5-phospho-1-deoxy-D-ribulos-1-ylimino)methylamino]-1-(5-phospho-beta-D-ribosyl)imidazole-4-carboxamide + L-glutamine = D-erythro-1-(imidazol-4-yl)glycerol 3-phosphate + 5-amino-1-(5-phospho-beta-D-ribosyl)imidazole-4-carboxamide + L-glutamate + H(+). Its pathway is amino-acid biosynthesis; L-histidine biosynthesis; L-histidine from 5-phospho-alpha-D-ribose 1-diphosphate: step 5/9. Its function is as follows. IGPS catalyzes the conversion of PRFAR and glutamine to IGP, AICAR and glutamate. The HisF subunit catalyzes the cyclization activity that produces IGP and AICAR from PRFAR using the ammonia provided by the HisH subunit. This is Imidazole glycerol phosphate synthase subunit HisF from Neisseria gonorrhoeae (strain ATCC 700825 / FA 1090).